A 448-amino-acid polypeptide reads, in one-letter code: tRNA-2-methylthio-N(6)-dimethylallyladenosine synthase (448 aa).

In terms of domain architecture, MTTase N-terminal spans Gly3–Asp119. [4Fe-4S] cluster contacts are provided by Cys12, Cys49, Cys82, Cys156, Cys160, and Cys163. Residues Arg142–Arg374 enclose the Radical SAM core domain. In terms of domain architecture, TRAM spans Glu377–Gly440.

It belongs to the methylthiotransferase family. MiaB subfamily. Monomer. It depends on [4Fe-4S] cluster as a cofactor.

It is found in the cytoplasm. The enzyme catalyses N(6)-dimethylallyladenosine(37) in tRNA + (sulfur carrier)-SH + AH2 + 2 S-adenosyl-L-methionine = 2-methylsulfanyl-N(6)-dimethylallyladenosine(37) in tRNA + (sulfur carrier)-H + 5'-deoxyadenosine + L-methionine + A + S-adenosyl-L-homocysteine + 2 H(+). Catalyzes the methylthiolation of N6-(dimethylallyl)adenosine (i(6)A), leading to the formation of 2-methylthio-N6-(dimethylallyl)adenosine (ms(2)i(6)A) at position 37 in tRNAs that read codons beginning with uridine. In Alkalilimnicola ehrlichii (strain ATCC BAA-1101 / DSM 17681 / MLHE-1), this protein is tRNA-2-methylthio-N(6)-dimethylallyladenosine synthase.